Consider the following 444-residue polypeptide: GTPase Der (444 aa).

EngA-type G domains follow at residues 3–167 and 180–353; these read PIVA…PEAE and LRLA…AECQ. GTP contacts are provided by residues 9–16, 56–60, 119–122, 186–193, 233–237, and 298–301; these read GRPNVGKS, DTGGM, NKVD, GRPNAGKS, DTAGV, and NKTD. The KH-like domain occupies 354 to 438; sequence IRIGTGELNR…PVKVVCRASH (85 aa).

Belongs to the TRAFAC class TrmE-Era-EngA-EngB-Septin-like GTPase superfamily. EngA (Der) GTPase family. Associates with the 50S ribosomal subunit.

Its function is as follows. GTPase that plays an essential role in the late steps of ribosome biogenesis. The sequence is that of GTPase Der from Solidesulfovibrio magneticus (strain ATCC 700980 / DSM 13731 / RS-1) (Desulfovibrio magneticus).